We begin with the raw amino-acid sequence, 126 residues long: MTPKPIRVFVYKNLHRTHREGKPWYSVQALEGDFKGRVIHRSGHVLLAHAKGVVRPAGRDKVRRERRKVVHAGIVGELISLLPQDFVGSKIAYNPYENDTFVHANTQAPFLGADRVYLSDSGVRAA.

This is Gene 82 protein (82) from Mycobacterium phage L5 (Mycobacteriophage L5).